A 138-amino-acid chain; its full sequence is Small ribosomal subunit protein uS12 (138 aa).

Residues 33–55 (KEHTNVSSPQKRGVCTRVGTMTP) form a disordered region. Position 102 is a 3-methylthioaspartic acid (aspartate 102).

The protein belongs to the universal ribosomal protein uS12 family. In terms of assembly, part of the 30S ribosomal subunit. Contacts proteins S8 and S17. May interact with IF1 in the 30S initiation complex.

Its function is as follows. With S4 and S5 plays an important role in translational accuracy. In terms of biological role, interacts with and stabilizes bases of the 16S rRNA that are involved in tRNA selection in the A site and with the mRNA backbone. Located at the interface of the 30S and 50S subunits, it traverses the body of the 30S subunit contacting proteins on the other side and probably holding the rRNA structure together. The combined cluster of proteins S8, S12 and S17 appears to hold together the shoulder and platform of the 30S subunit. This chain is Small ribosomal subunit protein uS12, found in Bacillus velezensis (strain DSM 23117 / BGSC 10A6 / LMG 26770 / FZB42) (Bacillus amyloliquefaciens subsp. plantarum).